The primary structure comprises 317 residues: MTTALDQLKQYTTVVADTGDFQQLAQYKPQDATTNPSLILKAVQKDAYRPILEKTVRDHAGESVGFIIDRLLIAFGTEILKLIPGRVSTEVDARLSFDTQRSIDKGREIIKLYEAAGIGRERVLIKLASTWEGIRAAEVLQREGIRCNMTLLFSLVQAAACAEAGAQLISPFVGRIYDWYKKQKGAEWDEAKDGGANDPGVQSVRRIYTYYKQFGYATEVMGASFRTTSQITELAGCDLLTISPDLLQKLHDSAETVARKLSPDAAKDAQLERVAIDESSFRFQLNDDAMATEKLAEGIRLFSADAVKLEKMIDALR.

The Schiff-base intermediate with substrate role is filled by lysine 126.

This sequence belongs to the transaldolase family. Type 1 subfamily. As to quaternary structure, homodimer.

The protein localises to the cytoplasm. It catalyses the reaction D-sedoheptulose 7-phosphate + D-glyceraldehyde 3-phosphate = D-erythrose 4-phosphate + beta-D-fructose 6-phosphate. It functions in the pathway carbohydrate degradation; pentose phosphate pathway; D-glyceraldehyde 3-phosphate and beta-D-fructose 6-phosphate from D-ribose 5-phosphate and D-xylulose 5-phosphate (non-oxidative stage): step 2/3. In terms of biological role, transaldolase is important for the balance of metabolites in the pentose-phosphate pathway. The polypeptide is Transaldolase (Burkholderia thailandensis (strain ATCC 700388 / DSM 13276 / CCUG 48851 / CIP 106301 / E264)).